A 99-amino-acid chain; its full sequence is High mobility group protein I (99 aa).

Residues 1–99 (MSDSPVKKGR…ADTEEVNSSD (99 aa)) are disordered. A Phosphoserine; by CDC2 and MAPK modification is found at serine 4. The segment at residues 7–19 (KKGRGRPAKAKPE) is a DNA-binding region (a.T hook 1). The span at 16–46 (AKPEETASPKAAKKEEKKVEEVPKKIEESTK) shows a compositional bias: basic and acidic residues. A Phosphoserine; by MAPK modification is found at serine 23. A DNA-binding region (a.T hook 2) is located at residues 54–66 (KKGRGRPSKGDKA). Phosphoserine; by PKC is present on serine 73. Positions 74–86 (GKGRGRPAKNAKK) form a DNA-binding region, a.T hook 3. Acidic residues predominate over residues 90–99 (ADTEEVNSSD).

Belongs to the HMGA family. In terms of processing, phosphorylated in a cell-cycle dependent manner; substantially reduced in cells that have finished proliferating and are differentiated. Phosphorylation at Ser-4 and Ser-23 results in a 10-fold weakening of DNA-binding activity and altered the mode of protein-DNA interaction.

The protein localises to the nucleus. The protein resides in the nucleolus. Its subcellular location is the chromosome. Binds preferentially to the minor groove of A+T rich regions in double-stranded DNA via the second and third DBA-binding domains. It is suggested that these proteins could function in nucleosome phasing and in the 3'-end processing of mRNA transcripts. They are also involved in the transcription regulation of genes containing, or in close proximity to A+T-rich regions. This chain is High mobility group protein I, found in Chironomus tentans (Midge).